Reading from the N-terminus, the 1174-residue chain is PR domain zinc finger protein 15 (1174 aa).

The 111-residue stretch at serine 75–alanine 185 folds into the SET domain. The interval leucine 252 to valine 307 is disordered. Residues alanine 261 to arginine 271 are compositionally biased toward basic and acidic residues. Residues proline 292–alanine 304 are compositionally biased toward basic residues. C2H2-type zinc fingers lie at residues histidine 402 to histidine 424 and phenylalanine 434 to histidine 457. A C2H2-type 3; degenerate zinc finger spans residues tyrosine 468 to histidine 486. 2 C2H2-type zinc fingers span residues phenylalanine 495 to histidine 517 and phenylalanine 522 to histidine 544. Lysine 552 is covalently cross-linked (Glycyl lysine isopeptide (Lys-Gly) (interchain with G-Cter in SUMO2)). C2H2-type zinc fingers lie at residues serine 571 to histidine 593 and tyrosine 598 to histidine 620. Positions isoleucine 639–proline 658 are disordered. Positions glutamate 644 to aspartate 655 are enriched in acidic residues. 8 C2H2-type zinc fingers span residues tyrosine 661–histidine 684, histidine 689–histidine 711, histidine 725–histidine 747, histidine 753–histidine 775, tyrosine 781–histidine 803, tyrosine 809–histidine 831, phenylalanine 837–histidine 859, and tryptophan 865–histidine 888. Disordered regions lie at residues alanine 957–threonine 1007 and leucine 1147–tyrosine 1174. The span at glycine 962–glutamine 973 shows a compositional bias: basic residues. The span at alanine 1154 to tyrosine 1174 shows a compositional bias: low complexity.

As to expression, expressed in embryonic stem cells (ESCs) (at protein level).

The protein localises to the nucleus. Functionally, sequence-specific DNA-binding transcriptional regulator. Plays a role as a molecular node in a transcriptional network regulating embryonic development and cell fate decision. Stimulates the expression of upstream key transcriptional activators and repressors of the Wnt/beta-catenin and MAPK/ERK pathways, respectively, that are essential for naive pluripotency and self-renewal maintenance of embryonic stem cells (ESCs). Specifically promotes SPRY1 and RSPO1 transcription activation through recognition and direct binding of a specific DNA sequence in their promoter regions. Also plays a role in induced pluripotent stem cells (iPSCs) reprogramming. Involved in early embryo development. This is PR domain zinc finger protein 15 from Mus musculus (Mouse).